The sequence spans 425 residues: Glutamyl-tRNA reductase (425 aa).

Substrate is bound by residues 49-52 (TCNR), serine 109, 114-116 (EGQ), and glutamine 120. The Nucleophile role is filled by cysteine 50. 189 to 194 (GAGETG) contributes to the NADP(+) binding site.

This sequence belongs to the glutamyl-tRNA reductase family. As to quaternary structure, homodimer.

It carries out the reaction (S)-4-amino-5-oxopentanoate + tRNA(Glu) + NADP(+) = L-glutamyl-tRNA(Glu) + NADPH + H(+). It functions in the pathway porphyrin-containing compound metabolism; protoporphyrin-IX biosynthesis; 5-aminolevulinate from L-glutamyl-tRNA(Glu): step 1/2. It participates in porphyrin-containing compound metabolism; chlorophyll biosynthesis. Catalyzes the NADPH-dependent reduction of glutamyl-tRNA(Glu) to glutamate 1-semialdehyde (GSA). In Chlorobium phaeobacteroides (strain DSM 266 / SMG 266 / 2430), this protein is Glutamyl-tRNA reductase.